The sequence spans 339 residues: Endospore coat-associated protein YutH (339 aa).

The protein belongs to the CotS family.

It localises to the forespore outer membrane. The protein localises to the spore coat. Involved in sporulation. The protein is Endospore coat-associated protein YutH (yutH) of Bacillus subtilis (strain 168).